We begin with the raw amino-acid sequence, 100 residues long: NADH-quinone oxidoreductase subunit K (100 aa).

The next 3 membrane-spanning stretches (helical) occupy residues 2 to 22 (ITLTHYLILSAILFSIALVGI), 29 to 49 (LMLFFATEIALNAVNIALAAF), and 63 to 83 (FFIIAIAASEVAVGLGLLIIW).

Belongs to the complex I subunit 4L family. As to quaternary structure, NDH-1 is composed of 14 different subunits. Subunits NuoA, H, J, K, L, M, N constitute the membrane sector of the complex.

It localises to the cell inner membrane. The enzyme catalyses a quinone + NADH + 5 H(+)(in) = a quinol + NAD(+) + 4 H(+)(out). In terms of biological role, NDH-1 shuttles electrons from NADH, via FMN and iron-sulfur (Fe-S) centers, to quinones in the respiratory chain. The immediate electron acceptor for the enzyme in this species is believed to be ubiquinone. Couples the redox reaction to proton translocation (for every two electrons transferred, four hydrogen ions are translocated across the cytoplasmic membrane), and thus conserves the redox energy in a proton gradient. This is NADH-quinone oxidoreductase subunit K from Nitratiruptor sp. (strain SB155-2).